Here is a 518-residue protein sequence, read N- to C-terminus: Bifunctional enzyme NanE/NanK (518 aa).

The tract at residues 1-234 (MCRVQGMIEE…DAVESAAKPS (234 aa)) is manNAc-6-P epimerase. The manNAc kinase stretch occupies residues 235-518 (SPVLAFDIGG…VADLAATYFS (284 aa)). ATP contacts are provided by residues 239–246 (AFDIGGTK) and 365–372 (GIGGGIVL).

The protein in the N-terminal section; belongs to the NanE family. In the C-terminal section; belongs to the ROK (NagC/XylR) family. NanK subfamily.

It catalyses the reaction an N-acyl-D-glucosamine 6-phosphate = an N-acyl-D-mannosamine 6-phosphate. It carries out the reaction an N-acyl-D-mannosamine + ATP = an N-acyl-D-mannosamine 6-phosphate + ADP + H(+). Its pathway is amino-sugar metabolism; N-acetylneuraminate degradation; D-fructose 6-phosphate from N-acetylneuraminate: step 2/5. The protein operates within amino-sugar metabolism; N-acetylneuraminate degradation; D-fructose 6-phosphate from N-acetylneuraminate: step 3/5. Converts N-acetylmannosamine-6-phosphate (ManNAc-6-P) to N-acetylglucosamine-6-phosphate (GlcNAc-6-P). In terms of biological role, catalyzes the phosphorylation of N-acetylmannosamine (ManNAc) to ManNAc-6-P. The chain is Bifunctional enzyme NanE/NanK (nanEK) from Brucella melitensis biotype 1 (strain ATCC 23456 / CCUG 17765 / NCTC 10094 / 16M).